Consider the following 469-residue polypeptide: Cysteine--tRNA ligase (469 aa).

Position 29 (cysteine 29) interacts with Zn(2+). Residues 31–41 carry the 'HIGH' region motif; it reads PTVYNYIHIGN. 3 residues coordinate Zn(2+): cysteine 210, histidine 235, and glutamate 239. Positions 267–271 match the 'KMSKS' region motif; that stretch reads KMSKS. Lysine 270 contributes to the ATP binding site.

The protein belongs to the class-I aminoacyl-tRNA synthetase family. As to quaternary structure, monomer. Zn(2+) is required as a cofactor.

It localises to the cytoplasm. The catalysed reaction is tRNA(Cys) + L-cysteine + ATP = L-cysteinyl-tRNA(Cys) + AMP + diphosphate. The protein is Cysteine--tRNA ligase of Thermosipho africanus (strain TCF52B).